Reading from the N-terminus, the 197-residue chain is Putative glutathione-dependent formaldehyde-activating enzyme (197 aa).

The CENP-V/GFA domain occupies 22–171 (FPGGKLYCHC…LKSLGLENYD (150 aa)). Zn(2+)-binding residues include cysteine 29, cysteine 31, cysteine 50, cysteine 52, cysteine 55, cysteine 97, and cysteine 100.

This sequence belongs to the Gfa family. Zn(2+) serves as cofactor.

The catalysed reaction is S-(hydroxymethyl)glutathione = glutathione + formaldehyde. The protein operates within one-carbon metabolism; formaldehyde degradation; formate from formaldehyde (glutathione route): step 1/3. Catalyzes the condensation of formaldehyde and glutathione to S-hydroxymethylglutathione. The protein is Putative glutathione-dependent formaldehyde-activating enzyme of Emericella nidulans (strain FGSC A4 / ATCC 38163 / CBS 112.46 / NRRL 194 / M139) (Aspergillus nidulans).